The following is a 158-amino-acid chain: Frataxin homolog, mitochondrial (158 aa).

It belongs to the frataxin family. In terms of assembly, monomer. Oligomer.

The protein resides in the mitochondrion. The enzyme catalyses 4 Fe(2+) + O2 + 4 H(+) = 4 Fe(3+) + 2 H2O. Functionally, promotes the biosynthesis of heme as well as the assembly and repair of iron-sulfur clusters by delivering Fe(2+) to proteins involved in these pathways. May play a role in the protection against iron-catalyzed oxidative stress through its ability to catalyze the oxidation of Fe(2+) to Fe(3+). May be able to store large amounts of the metal in the form of a ferrihydrite mineral by oligomerization. This chain is Frataxin homolog, mitochondrial, found in Schizosaccharomyces pombe (strain 972 / ATCC 24843) (Fission yeast).